A 119-amino-acid chain; its full sequence is Large ribosomal subunit protein bL20 (119 aa).

This sequence belongs to the bacterial ribosomal protein bL20 family.

In terms of biological role, binds directly to 23S ribosomal RNA and is necessary for the in vitro assembly process of the 50S ribosomal subunit. It is not involved in the protein synthesizing functions of that subunit. This Alkaliphilus oremlandii (strain OhILAs) (Clostridium oremlandii (strain OhILAs)) protein is Large ribosomal subunit protein bL20.